The sequence spans 68 residues: Protease A inhibitor 3 (68 aa).

The residue at position 1 (methionine 1) is an N-acetylmethionine. Residues 1-14 (MNTDQQKVSEIFQS) are compositionally biased toward polar residues. 2 disordered regions span residues 1–21 (MNTD…KLQG) and 33–68 (MASQ…HKKE). The interval 1-32 (MNTDQQKVSEIFQSSKEKLQGDAKVVSDAFKK) is inhibitory domain. The segment covering 33–53 (MASQDKDGKTTDADESEKHNY) has biased composition (basic and acidic residues).

This sequence belongs to the protease inhibitor I34 family.

In terms of biological role, specific and potent inhibitor for yeast aspartic protease A (yscA). The proteinase acts as a folding template stabilizing the helical conformation in the inhibitor, which results in the potent and specific blockage of the proteolytic activity. The protein is Protease A inhibitor 3 (PAI3) of Saccharomyces cerevisiae (strain ATCC 204508 / S288c) (Baker's yeast).